Here is a 217-residue protein sequence, read N- to C-terminus: Response regulator RR06 (217 aa).

A Response regulatory domain is found at 2 to 115 (NILVADDEEM…LLVKRIKALI (114 aa)). Residue D51 is modified to 4-aspartylphosphate. Residues 122–217 (EDIWRYQDVT…VKNVGYKISL (96 aa)) constitute a DNA-binding region (ompR/PhoB-type).

Phosphorylated at threonine residues by StkP; threonine phosphorylation enhances RR06 binding to DNA and may also increase expression of CbpA. May be de-phosphorylated by PhpP.

Functionally, member of the two-component regulatory system HK06/RR06 involved in regulation of target genes, including choline-binding protein CbpA. Binds to the promoter region of CbpA and directly activates transcription. The polypeptide is Response regulator RR06 (Streptococcus pneumoniae serotype 2 (strain D39 / NCTC 7466)).